The primary structure comprises 46 residues: Iota-conotoxin-like R11.17 (46 aa).

Residues proline 2 and proline 11 each carry the 4-hydroxyproline modification. Disulfide bonds link cysteine 5-cysteine 19, cysteine 12-cysteine 22, cysteine 18-cysteine 27, and cysteine 21-cysteine 38. Proline 29 is subject to 4-hydroxyproline. The residue at position 44 (phenylalanine 44) is a D-phenylalanine.

This sequence belongs to the conotoxin I1 superfamily. Expressed by the venom duct.

It is found in the secreted. Its function is as follows. Iota-conotoxins bind to voltage-gated sodium channels (Nav) and act as agonists by shifting the voltage-dependence of activation to more hyperpolarized levels. Produces general excitatory symptoms. The polypeptide is Iota-conotoxin-like R11.17 (Conus radiatus (Rayed cone)).